Consider the following 1246-residue polypeptide: Putative helicase L115 (1246 aa).

The segment at 1–21 (MSKTITKKVNKKTKKSTKINP) is disordered. The Helicase ATP-binding domain occupies 872–1030 (AKFTDGYHGF…YYMLKMLQTG (159 aa)). Residue 885 to 892 (SDVGSGKT) coordinates ATP.

The polypeptide is Putative helicase L115 (Acanthamoeba polyphaga (Amoeba)).